The chain runs to 962 residues: Protease 3 (962 aa).

An N-terminal signal peptide occupies residues 1–23 (MPRSTWFKALLLLVALWGPAVQA). His88 lines the Zn(2+) pocket. The Proton acceptor role is filled by Glu91. Zn(2+) contacts are provided by His92 and Glu169.

Belongs to the peptidase M16 family. As to quaternary structure, monomer. Zn(2+) is required as a cofactor.

It is found in the periplasm. The enzyme catalyses Preferential cleavage of 16-Tyr-|-Leu-17 and 25-Phe-|-Tyr-26 bonds of oxidized insulin B chain. Also acts on other substrates of Mw less than 7 kDa such as insulin and glucagon.. Functionally, endopeptidase that degrades small peptides of less than 7 kDa, such as glucagon and insulin. This Salmonella typhimurium (strain LT2 / SGSC1412 / ATCC 700720) protein is Protease 3 (ptrA).